The sequence spans 64 residues: MPKQKTHSGAKKRFKITGSGKVMKQQAGMRHNLEVKGSDRKRRLNADQVVPEVDAKFVRRMLGK.

It belongs to the bacterial ribosomal protein bL35 family.

This is Large ribosomal subunit protein bL35 from Leifsonia xyli subsp. xyli (strain CTCB07).